A 304-amino-acid polypeptide reads, in one-letter code: Probable WRKY transcription factor 13 (304 aa).

Residues 141–190 (QKNNHGSEIDVDDNDDEVGDGGGINDDDNGRHHHHDTPSRHDKHNTASLG) are disordered. The span at 149-159 (IDVDDNDDEVG) shows a compositional bias: acidic residues. Residues 217–282 (SEVDVLDDGY…YEGRHLHSPS (66 aa)) constitute a DNA-binding region (WRKY).

It belongs to the WRKY group II-c family.

Its subcellular location is the nucleus. Functionally, transcription factor. Interacts specifically with the W box (5'-(T)TGAC[CT]-3'), a frequently occurring elicitor-responsive cis-acting element. This is Probable WRKY transcription factor 13 (WRKY13) from Arabidopsis thaliana (Mouse-ear cress).